The following is a 268-amino-acid chain: Ribosomal RNA small subunit methyltransferase A (268 aa).

S-adenosyl-L-methionine-binding residues include asparagine 16, leucine 18, glycine 43, glutamate 64, aspartate 89, and asparagine 110.

It belongs to the class I-like SAM-binding methyltransferase superfamily. rRNA adenine N(6)-methyltransferase family. RsmA subfamily.

Its subcellular location is the cytoplasm. It catalyses the reaction adenosine(1518)/adenosine(1519) in 16S rRNA + 4 S-adenosyl-L-methionine = N(6)-dimethyladenosine(1518)/N(6)-dimethyladenosine(1519) in 16S rRNA + 4 S-adenosyl-L-homocysteine + 4 H(+). Functionally, specifically dimethylates two adjacent adenosines (A1518 and A1519) in the loop of a conserved hairpin near the 3'-end of 16S rRNA in the 30S particle. May play a critical role in biogenesis of 30S subunits. This is Ribosomal RNA small subunit methyltransferase A from Pseudomonas syringae pv. tomato (strain ATCC BAA-871 / DC3000).